A 639-amino-acid chain; its full sequence is PTS-dependent dihydroxyacetone kinase operon regulatory protein (639 aa).

The interval 1-318 is sensor domain; sequence MSGAFNNDGR…MRQLMTSQLG (318 aa). The region spanning 52 to 189 is the GAF domain; sequence AMLTLGQAAL…AIAREVGNLL (138 aa). One can recognise a PAS domain in the interval 203–265; sequence NQLNALLESM…AVLQQAIKQA (63 aa). Residues 327–552 form the Sigma-54 factor interaction domain; it reads MPQDDPQTRR…LYSVIENLAL (226 aa). Residues 355 to 362 and 415 to 424 each bind ATP; these read GEEGVGKA and AHGGTLFLEK.

In terms of assembly, homodimer. DhaR forms complexes with DhaK and DhaL-ADP.

Positively regulates the dhaKLM operon from a sigma-70 promoter. Represses its own expression. The protein is PTS-dependent dihydroxyacetone kinase operon regulatory protein of Escherichia coli (strain K12).